Reading from the N-terminus, the 30-residue chain is Conotoxin TVIIA (30 aa).

3 disulfides stabilise this stretch: Cys-2–Cys-14, Cys-9–Cys-19, and Cys-13–Cys-24. 4-hydroxyproline occurs at positions 10 and 11.

In terms of processing, three different forms of TVIIA exist. Pro-10 and Pro-11 of conotoxin TVIIA are hydroxylated in TVIIA, whereas Pro-10 is not hydroxylated in [Pro10]TVIIA and neither Pro-10 nor Pro-11 are hydroxylated in [Pro10,11]TVIIA. In terms of tissue distribution, expressed by the venom duct.

It is found in the secreted. In terms of biological role, by structural similarity with conotoxin GS, may inhibit the sodium channel (Nav). No effect was observed upon intracranial injections into mice and intraperitoneal injections into goldfish (25 ug). The chain is Conotoxin TVIIA from Conus tulipa (Fish-hunting cone snail).